We begin with the raw amino-acid sequence, 30 residues long: Phospholemman-like protein (30 aa).

This sequence belongs to the FXYD family. Post-translationally, phosphorylated by protein kinase a (PK-A) and protein kinase C (PK-C). Phosphorylated in response to insulin and adrenergic stimulation.

It is found in the microsome membrane. The protein resides in the endoplasmic reticulum membrane. Its function is as follows. Induces a hyperpolarization-activated chloride current when expressed in Xenopus oocytes. May have a functional role in muscle contraction. This Squalus acanthias (Spiny dogfish) protein is Phospholemman-like protein.